Here is an 87-residue protein sequence, read N- to C-terminus: Conotoxin Ca6.2 (87 aa).

Residues 1–19 (MHTLEMLLLVLLLVPLAPG) form the signal peptide. Residues 20–52 (EGDGQAVGGDRNPSEARRAYKRLLQRPARRMDR) constitute a propeptide that is removed on maturation. 3 disulfides stabilise this stretch: Cys-55-Cys-64, Cys-58-Cys-70, and Cys-63-Cys-84.

It belongs to the conotoxin Q superfamily. In terms of tissue distribution, expressed by the venom duct.

It localises to the secreted. The polypeptide is Conotoxin Ca6.2 (Conus caracteristicus (Characteristic cone)).